The chain runs to 427 residues: MLRRIFVSTFLVFGIVSLYAKDLEVSVRSEISLLPIHVELKIGPNDAKQQKYLRSLCNTFISDLALGDRLQPSSVKSEALSPPFSIAIVSRYPEIAFTIARGSQNHQQFHSLVLTEDISSNRQKIHEAADKIHYALTKVPGISSGKIVFSLSKNPQDGELKQGELWSVDYDGANLRALTQENSLSITPNWMNIGNCNPYLYVSYKYGIPKIFLGSLENTTGKKVLNLQGNQFMPTFSPRKKLLAFISDTYGNPDLFLQSFSLSKGVMGKPRRVLNETFGTQGNPSFSPDGSKLVFVSNRDGRPRLYIIQIDPEIQTPRLLTKKYRNSSCPSWSPDGKKIAFCSVIKGVRQICLYDLSTGKDYQLTTTPIDKEGPSWAIDSQHLVYSAGNSGESELYLLSLITQKTKKIVIGLGEKRFPSWGGFPNNQ.

The first 20 residues, 1–20, serve as a signal peptide directing secretion; sequence MLRRIFVSTFLVFGIVSLYA.

It belongs to the TolB family.

Its subcellular location is the periplasm. The chain is Protein TolB homolog from Chlamydia caviae (strain ATCC VR-813 / DSM 19441 / 03DC25 / GPIC) (Chlamydophila caviae).